We begin with the raw amino-acid sequence, 79 residues long: Morintide mO2 (79 aa).

Residues Met-1–Ala-20 form the signal peptide. Residues Gln-21–Gly-63 enclose the Chitin-binding type-1 domain. Disulfide bonds link Cys-23–Cys-38, Cys-32–Cys-44, Cys-37–Cys-51, and Cys-57–Cys-61. Residues Gly-64 to Pro-79 constitute a propeptide that is removed on maturation.

In terms of tissue distribution, leaves (at protein level).

In terms of biological role, chitin-binding protein which functions in defense against chitin-containing fungal pathogens. The polypeptide is Morintide mO2 (Moringa oleifera (Horseradish tree)).